Here is a 410-residue protein sequence, read N- to C-terminus: MIDMLVLRLPFIDSLVCSRLSGNDLIAFVDLSKIATLSGMNLSARTVEYHIDGDLTVSGLSHPFESLPTHYSGIAFKIYEGSKNFYPCVEIKASPAKVLQGHNVFGTTDLALCSEALLLNFANSLPCLYDLLDVNATTISRIDATFSARAPNENIAKQVIDHLRNVSNGQTKSTRSQNWESTVTWNETSRHRTLVAYLKHVELQHQIQQLSSKPSAKMTSYQKEQLKVLSNPDLLEFASGLVRFEARIKTRYLKSFGLPLNLFDAIRFASDYNSQGKDLIFDLWSFSFSELFKAFEGDSMNIYDDSAVLDAIQSKHFTITPSGKTSFAKASRYFGFYRRLVNEGYDSVALTMPRNSFWRYVSALVECGIPKSQLMNLSTCNNVVPLVRFINVDFSSQRPDWYNEPVLKIA.

Belongs to the inovirus G2P protein family.

It carries out the reaction ATP + (deoxyribonucleotide)n-3'-hydroxyl + 5'-phospho-(deoxyribonucleotide)m = (deoxyribonucleotide)n+m + AMP + diphosphate.. Functionally, isoform G2P plays an essential role in viral DNA replication. Binds the origin of replication and cleaves the dsDNA replicative form I (RFI) and becomes covalently bound to it via phosphotyrosine bond, generating the dsDNA replicative form II (RFII). In turn, viral DNA replication initiates at the 3'-OH of the cleavage site. After one round of rolling circle synthesis, protein G2P is linked to the newly synthesized ssDNA and joins the ends of the displaced strand to generate a circular single-stranded molecule ready to be packed into a virion. Isoform G10P protein binds to double-stranded DNA and prevents hydrolysis by nucleases. Additionally, G10P is an inhibitor of DNA replication and may have a role in the transition from semiconservative replicative form DNA replication to single-stranded DNA synthesis in the life cycle. This is Replication-associated protein G2P (II) from Enterobacteria phage M13 (Bacteriophage M13).